We begin with the raw amino-acid sequence, 819 residues long: Eukaryotic translation initiation factor 3 subunit C (819 aa).

The disordered stretch occupies residues 1-106; the sequence is MSRFFLKTYE…DSSDEEDGKK (106 aa). 2 stretches are compositionally biased toward acidic residues: residues 17-41 and 47-59; these read GEEE…ELSD and DSDE…EDND. The 176-residue stretch at 620 to 795 folds into the PCI domain; the sequence is FHQHINLDLI…EYIIFERGEE (176 aa).

Belongs to the eIF-3 subunit C family. Component of the eukaryotic translation initiation factor 3 (eIF-3) complex.

It is found in the cytoplasm. Its function is as follows. Component of the eukaryotic translation initiation factor 3 (eIF-3) complex, which is involved in protein synthesis of a specialized repertoire of mRNAs and, together with other initiation factors, stimulates binding of mRNA and methionyl-tRNAi to the 40S ribosome. The eIF-3 complex specifically targets and initiates translation of a subset of mRNAs involved in cell proliferation. The chain is Eukaryotic translation initiation factor 3 subunit C from Kluyveromyces lactis (strain ATCC 8585 / CBS 2359 / DSM 70799 / NBRC 1267 / NRRL Y-1140 / WM37) (Yeast).